Consider the following 532-residue polypeptide: Glucan synthesis regulatory protein (532 aa).

A disordered region spans residues 374-532 (TANKRKSMAP…DAEDMKDIEI (159 aa)). The segment covering 381 to 393 (MAPSMASASGMRS) has biased composition (low complexity). Over residues 447-457 (PTTSLTASNAS) the composition is skewed to polar residues. Positions 475 to 516 (SGEHSKEDIKVNEDSPAKERTSEDKEKKPETEANGKATESKG) are enriched in basic and acidic residues.

This sequence belongs to the KNR4/SMI1 family.

Involved in the regulation of 1,3-beta-glucan synthase activity and cell-wall formation. The chain is Glucan synthesis regulatory protein (cot-2) from Neurospora crassa (strain ATCC 24698 / 74-OR23-1A / CBS 708.71 / DSM 1257 / FGSC 987).